We begin with the raw amino-acid sequence, 601 residues long: Regulatory protein BlaR1 (601 aa).

Residues 1–8 (MSSSFFIP) are Extracellular-facing. A helical membrane pass occupies residues 9-26 (FLVSQILLSLFFSIIILI). The Cytoplasmic portion of the chain corresponds to 27 to 35 (KKLLRTQIT). Residues 36–52 (VGTHYYISVISLLALIA) traverse the membrane as a helical segment. Over 53 to 115 (PFIPFHFLKS…EQSSSKMIDS (63 aa)) the chain is Extracellular. A helical transmembrane segment spans residues 116–133 (AFFAVWILGVAVMLLATL). Topologically, residues 134-322 (YSNLKIGKIK…QTASPLLKAK (189 aa)) are cytoplasmic. Residues 323-339 (SALVFTLVLGAILAGTP) traverse the membrane as a helical segment. The Extracellular portion of the chain corresponds to 340–601 (SVSILAMQKE…KKGIYPSVSR (262 aa)). A beta-lactam antibiotic sensor domain region spans residues 354-601 (PGTNVEYEDY…KKGIYPSVSR (248 aa)). Ser402 functions as the Acyl-ester intermediate in the catalytic mechanism. Lys405 bears the N6-carboxylysine mark.

This sequence belongs to the peptidase M56 family. Carboxylation occurs on two lysine residues. Carboxylation at 'Lys-405' activates the active site serine residue for acylation. On acylation, the lysine side chain experiences a spontaneous decarboxylation that entraps the sensor in its activated state.

It localises to the cell membrane. Its function is as follows. Integral membrane protein involved in sensing of the presence of beta-lactam antibiotics and transduction of the information to the cytoplasm. Mechanistically, activation of the signal transducer involves acylation of a serine in the C-terminal sensor domain upon binding of the beta-lactam antibiotic. In turn, a conformational change occurs and the signal is transmitted from the cell surface to the cytoplasm. There, the zinc protease domain is activated and initiates autoproteolysis as well as cleavage of the transcriptional repressor BlaI leading to derepression of antibiotic resistance genes. The chain is Regulatory protein BlaR1 (blaR1) from Bacillus licheniformis.